Consider the following 274-residue polypeptide: Nitrogenase iron protein (274 aa).

Glycine 8 to serine 15 is a binding site for ATP. Cysteine 94 provides a ligand contact to [4Fe-4S] cluster. Arginine 97 is modified (ADP-ribosylarginine; by dinitrogenase reductase ADP-ribosyltransferase). A [4Fe-4S] cluster-binding site is contributed by cysteine 131.

Belongs to the NifH/BchL/ChlL family. In terms of assembly, homodimer. The cofactor is [4Fe-4S] cluster. The reversible ADP-ribosylation of Arg-97 inactivates the nitrogenase reductase and regulates nitrogenase activity.

The catalysed reaction is N2 + 8 reduced [2Fe-2S]-[ferredoxin] + 16 ATP + 16 H2O = H2 + 8 oxidized [2Fe-2S]-[ferredoxin] + 2 NH4(+) + 16 ADP + 16 phosphate + 6 H(+). The key enzymatic reactions in nitrogen fixation are catalyzed by the nitrogenase complex, which has 2 components: the iron protein and the molybdenum-iron protein. This is Nitrogenase iron protein from Pelodictyon phaeoclathratiforme (strain DSM 5477 / BU-1).